The primary structure comprises 575 residues: uncharacterized protein (575 aa).

The HTH marR-type domain maps to 1 to 120 (MKLIEHYVAL…YNMWLSEVFG (120 aa)). Residues 26–49 (LTEIADCLFCTERNAKLILHKLEN) constitute a DNA-binding region (H-T-H motif). The segment at 176-490 (EPKPHLVHGW…FGFLHLLLSE (315 aa)) is solute-binding region.

In the C-terminal section; belongs to the bacterial solute-binding protein 5 family.

This is an uncharacterized protein from Bacillus subtilis (strain 168).